Reading from the N-terminus, the 218-residue chain is Ohanin-like protein (218 aa).

Residues 1–40 (MSPSAGFQFSLYFLQTKKVLWKLTGLCYILLFTLCFFADQ) form the signal peptide. Residues 41–48 (ENGGKALA) constitute a propeptide that is removed on maturation. One can recognise a B30.2/SPRY domain in the interval 49–155 (SPPGIWKRAD…RIWQTGLWWL (107 aa)). A propeptide spanning residues 156-218 (RHLETDPGRV…LGGTVSLTTL (63 aa)) is cleaved from the precursor.

Belongs to the ohanin/vespryn family. As to expression, expressed by the venom gland.

It localises to the secreted. Neurotoxin that produces dose-dependent hypolocomotion and hyperalgesia in mice. May directly act on the central nervous system, as it is 6500-fold more potent when administered intracerebroventricularly than intraperitoneal. The chain is Ohanin-like protein from Lachesis muta muta (Bushmaster).